Consider the following 141-residue polypeptide: HTH-type transcriptional repressor NsrR (141 aa).

The HTH rrf2-type domain maps to 2-129; the sequence is QLTSFTDYAL…DDCSIAELLD (128 aa). Positions 28-51 form a DNA-binding region, H-T-H motif; sequence ITDVTELFGVSRNHMVKVINRLGQ. Residues Cys-91, Cys-96, and Cys-102 each contribute to the [2Fe-2S] cluster site.

The cofactor is [2Fe-2S] cluster.

Nitric oxide-sensitive repressor of genes involved in protecting the cell against nitrosative stress. May require iron for activity. The polypeptide is HTH-type transcriptional repressor NsrR (Vibrio vulnificus (strain CMCP6)).